Consider the following 258-residue polypeptide: Deoxyribose-phosphate aldolase (258 aa).

The active-site Proton donor/acceptor is the D102. Catalysis depends on K165, which acts as the Schiff-base intermediate with acetaldehyde. The active-site Proton donor/acceptor is K199.

This sequence belongs to the DeoC/FbaB aldolase family. DeoC type 2 subfamily.

Its subcellular location is the cytoplasm. It catalyses the reaction 2-deoxy-D-ribose 5-phosphate = D-glyceraldehyde 3-phosphate + acetaldehyde. Its pathway is carbohydrate degradation; 2-deoxy-D-ribose 1-phosphate degradation; D-glyceraldehyde 3-phosphate and acetaldehyde from 2-deoxy-alpha-D-ribose 1-phosphate: step 2/2. In terms of biological role, catalyzes a reversible aldol reaction between acetaldehyde and D-glyceraldehyde 3-phosphate to generate 2-deoxy-D-ribose 5-phosphate. This is Deoxyribose-phosphate aldolase from Vibrio campbellii (strain ATCC BAA-1116).